Consider the following 194-residue polypeptide: Orotate phosphoribosyltransferase (194 aa).

Residue 117–125 (EDIVTTGLS) coordinates 5-phospho-alpha-D-ribose 1-diphosphate. Residues T121 and R149 each coordinate orotate.

Belongs to the purine/pyrimidine phosphoribosyltransferase family. PyrE subfamily. As to quaternary structure, homodimer. It depends on Mg(2+) as a cofactor.

The enzyme catalyses orotidine 5'-phosphate + diphosphate = orotate + 5-phospho-alpha-D-ribose 1-diphosphate. Its pathway is pyrimidine metabolism; UMP biosynthesis via de novo pathway; UMP from orotate: step 1/2. In terms of biological role, catalyzes the transfer of a ribosyl phosphate group from 5-phosphoribose 1-diphosphate to orotate, leading to the formation of orotidine monophosphate (OMP). This chain is Orotate phosphoribosyltransferase, found in Parvibaculum lavamentivorans (strain DS-1 / DSM 13023 / NCIMB 13966).